A 261-amino-acid polypeptide reads, in one-letter code: Ribosome-inactivating protein PD-L3/PD-L4 (261 aa).

Asn10 carries N-linked (GlcNAc...) asparagine; in PD-L3 glycosylation. 2 cysteine pairs are disulfide-bonded: Cys34/Cys258 and Cys84/Cys105. Glu175 is a catalytic residue.

This sequence belongs to the ribosome-inactivating protein family. Type 1 RIP subfamily.

The catalysed reaction is Endohydrolysis of the N-glycosidic bond at one specific adenosine on the 28S rRNA.. In terms of biological role, inhibits protein synthesis. Does not cleave supercoiled pBR322 dsDNA. The chain is Ribosome-inactivating protein PD-L3/PD-L4 from Phytolacca dioica (Bella sombra tree).